Here is a 529-residue protein sequence, read N- to C-terminus: MFTPTDISGEPSAVGTQWTPYLSHPVDFGAQHFLEAMLNVISQPNINSSVIMRADIISDSLNMMPNIMGTDKANEGFIFDTHEGPVDDDKKDTDKDKNTPVPPNLQDYEPRQVEVTPCPVKRVIVRRIIPRNPQNDFSVNQTCIVHSDKPLWDSDGKETSEGAKIAISYISHHDHPKSCPYYLPCVKAVLLYFDGSAISVYYEKYTDYELSAEQEERCGRIALHLLHTVFRHSSGQKAGYKKRVHHDMIIDRIKFQDRYIYLKQKYAHSLVSSWVESTDPRKHVFEDLAIAAFLIELWGQMYKNKDDIYFYDLGCGNGLLVNILIKEGYVGEGVDARARKSWQTYEPEVTQKLLEKIVVPTVLLDQMVGQAQYLPPHAAEKRLAEANGLATDPRVFQTAGLPENAFLIGNHSDELTCWIPLMDRPFMVIPCCSHALSGEKKRFPPTSSDPEEKSTYRSLVGHVEQLSSKIGWQVEKEYLRIPSTRNAAVIGRTRVEPQMNIFEILYSEGGGEGWVERARDLCAKSPRNH.

Residues 78-107 (IFDTHEGPVDDDKKDTDKDKNTPVPPNLQD) are disordered. Positions 80-98 (DTHEGPVDDDKKDTDKDKN) are enriched in basic and acidic residues.

Belongs to the TRM44 family.

It localises to the cytoplasm. The enzyme catalyses uridine(44) in tRNA(Ser) + S-adenosyl-L-methionine = 2'-O-methyluridine(44) in tRNA(Ser) + S-adenosyl-L-homocysteine + H(+). Functionally, probable adenosyl-L-methionine (AdoMet)-dependent tRNA (uracil-O(2)-)-methyltransferase. The protein is tRNA (uracil-O(2)-)-methyltransferase (TRM44) of Yarrowia lipolytica (strain CLIB 122 / E 150) (Yeast).